Reading from the N-terminus, the 136-residue chain is DUF35 domain-containing scaffold protein (136 aa).

3 residues coordinate Zn(2+): cysteine 25, cysteine 38, and cysteine 41.

The protein belongs to the scaffold protein DUF35 family. As to quaternary structure, interacts with acetoacetyl-CoA thiolase and HMG-CoA synthase (HMGCS) that catalyzes the first and second step in the mevalonate pathway, respectively.

Its function is as follows. Functions as a scaffold to connect the acetoacetyl-CoA thiolase and HMG-CoA synthase (HMGCS) dimers in the channeling thiolase/HMGCS complex, which allows for efficient coupling of the endergonic thiolase reaction with the exergonic HMGCS reaction. The chain is DUF35 domain-containing scaffold protein from Pyrococcus furiosus (strain ATCC 43587 / DSM 3638 / JCM 8422 / Vc1).